Here is a 305-residue protein sequence, read N- to C-terminus: NADH-cytochrome b5 reductase 1 (305 aa).

The helical transmembrane segment at 8–28 (VLLASLGVGLVTLLGLAVGSY) threads the bilayer. The 113-residue stretch at 44 to 156 (NEKYLLRLLD…RGPSGLLTYT (113 aa)) folds into the FAD-binding FR-type domain. FAD is bound by residues 136 to 166 (DSLK…IQPN) and 175 to 210 (VAKK…QCFL).

The protein belongs to the flavoprotein pyridine nucleotide cytochrome reductase family. FAD serves as cofactor. In terms of tissue distribution, widely expressed.

It localises to the membrane. It carries out the reaction 2 Fe(III)-[cytochrome b5] + NADH = 2 Fe(II)-[cytochrome b5] + NAD(+) + H(+). Its function is as follows. NADH-cytochrome b5 reductases are involved in desaturation and elongation of fatty acids, cholesterol biosynthesis, drug metabolism, and, in erythrocyte, methemoglobin reduction. This chain is NADH-cytochrome b5 reductase 1 (CYB5R1), found in Homo sapiens (Human).